The chain runs to 400 residues: Exodeoxyribonuclease 7 large subunit (400 aa).

It belongs to the XseA family. In terms of assembly, heterooligomer composed of large and small subunits.

The protein resides in the cytoplasm. The catalysed reaction is Exonucleolytic cleavage in either 5'- to 3'- or 3'- to 5'-direction to yield nucleoside 5'-phosphates.. In terms of biological role, bidirectionally degrades single-stranded DNA into large acid-insoluble oligonucleotides, which are then degraded further into small acid-soluble oligonucleotides. The polypeptide is Exodeoxyribonuclease 7 large subunit (Clostridium perfringens (strain ATCC 13124 / DSM 756 / JCM 1290 / NCIMB 6125 / NCTC 8237 / Type A)).